The sequence spans 242 residues: Spiralin (242 aa).

Positions 1 to 23 (MKKLLSILAVFGVSAVGTTSVVA) are cleaved as a signal peptide. Residue Cys-24 is the site of N-palmitoyl cysteine attachment. Residue Cys-24 is the site of S-diacylglycerol cysteine attachment.

This sequence belongs to the spiralin family. In terms of assembly, seems to occur as dimer, tetramers, and large oligomers of identical chains. Palmitate and stearate are the major lipid components.

It localises to the cell membrane. In terms of biological role, major membrane protein of spiroplasma. This Spiroplasma melliferum protein is Spiralin (spi).